The sequence spans 131 residues: UPF0342 protein DSY1594 (131 aa).

It belongs to the UPF0342 family.

This chain is UPF0342 protein DSY1594, found in Desulfitobacterium hafniense (strain Y51).